The chain runs to 548 residues: Probable malate:quinone oxidoreductase (548 aa).

Positions 521-548 (DKPQAADSTPKPQLKPQPVQKEVADIAL) are disordered. Over residues 530–541 (PKPQLKPQPVQK) the composition is skewed to low complexity.

It belongs to the MQO family. FAD is required as a cofactor.

It catalyses the reaction (S)-malate + a quinone = a quinol + oxaloacetate. It functions in the pathway carbohydrate metabolism; tricarboxylic acid cycle; oxaloacetate from (S)-malate (quinone route): step 1/1. This chain is Probable malate:quinone oxidoreductase, found in Escherichia coli (strain UTI89 / UPEC).